Here is a 185-residue protein sequence, read N- to C-terminus: Elongation factor P (185 aa).

Belongs to the elongation factor P family.

It localises to the cytoplasm. It participates in protein biosynthesis; polypeptide chain elongation. Its function is as follows. Involved in peptide bond synthesis. Stimulates efficient translation and peptide-bond synthesis on native or reconstituted 70S ribosomes in vitro. Probably functions indirectly by altering the affinity of the ribosome for aminoacyl-tRNA, thus increasing their reactivity as acceptors for peptidyl transferase. The polypeptide is Elongation factor P (Mesomycoplasma hyopneumoniae (strain 232) (Mycoplasma hyopneumoniae)).